The sequence spans 367 residues: Protein-glutamate methylesterase/protein-glutamine glutaminase 1 (367 aa).

The Response regulatory domain occupies 9–126 (KVLCVDDSAL…RDGMLDYSEK (118 aa)). Residue aspartate 60 is modified to 4-aspartylphosphate. Residues 168–360 (LVSTEKLIIV…RRIMARLASM (193 aa)) enclose the CheB-type methylesterase domain. Active-site residues include serine 180, histidine 206, and aspartate 302.

It belongs to the CheB family. Post-translationally, phosphorylated by CheA. Phosphorylation of the N-terminal regulatory domain activates the methylesterase activity.

It localises to the cytoplasm. It catalyses the reaction [protein]-L-glutamate 5-O-methyl ester + H2O = L-glutamyl-[protein] + methanol + H(+). It carries out the reaction L-glutaminyl-[protein] + H2O = L-glutamyl-[protein] + NH4(+). In terms of biological role, involved in chemotaxis. Part of a chemotaxis signal transduction system that modulates chemotaxis in response to various stimuli. Catalyzes the demethylation of specific methylglutamate residues introduced into the chemoreceptors (methyl-accepting chemotaxis proteins or MCP) by CheR. Also mediates the irreversible deamidation of specific glutamine residues to glutamic acid. In Burkholderia pseudomallei (strain K96243), this protein is Protein-glutamate methylesterase/protein-glutamine glutaminase 1.